The sequence spans 588 residues: Probable catabolite repression protein creC (588 aa).

WD repeat units lie at residues 249 to 289 (VCNS…ALFT), 323 to 364 (LANQ…DIFR), 365 to 404 (SYYG…IVAR), and 407 to 451 (GHNS…LHRP). The tract at residues 452–499 (RAHQASTRQRTSMITSNSQHASRHRADSAGNRARSDSQRTADGYDEYD) is disordered. Polar residues predominate over residues 455-471 (QASTRQRTSMITSNSQH). The WD 5 repeat unit spans residues 523–560 (IGSDPICWLGFQEDSIMTSSLEGHIRTWDRPREGINDT). The disordered stretch occupies residues 569 to 588 (AISAGAGSGSAVANSARGSL).

It belongs to the WD repeat creC family. In terms of assembly, interacts with creB.

Functionally, component of the regulatory network controlling carbon source utilization through ubiquitination and deubiquitination involving creA, creB, creC, creD and acrB. Required to prevent the proteolysis of the CreB deubiquitinating enzyme in the absence of carbon catabolite repression. CreB deubiquitinating enzyme stabilized in a complex with the CreC leads to the expression of genes such as those in the proline and quinate pathways. This chain is Probable catabolite repression protein creC (creC), found in Aspergillus terreus (strain NIH 2624 / FGSC A1156).